A 223-amino-acid chain; its full sequence is Urease accessory protein UreF (223 aa).

This sequence belongs to the UreF family. In terms of assembly, ureD, UreF and UreG form a complex that acts as a GTP-hydrolysis-dependent molecular chaperone, activating the urease apoprotein by helping to assemble the nickel containing metallocenter of UreC. The UreE protein probably delivers the nickel.

The protein resides in the cytoplasm. Its function is as follows. Required for maturation of urease via the functional incorporation of the urease nickel metallocenter. The chain is Urease accessory protein UreF from Rhizobium meliloti (strain 1021) (Ensifer meliloti).